The sequence spans 104 residues: Astakine (104 aa).

A signal peptide spans 1 to 22; the sequence is MKMRGVSVGVLVVAMMSGLAMA. 5 disulfide bridges follow: Cys25-Cys38, Cys32-Cys50, Cys37-Cys76, Cys60-Cys84, and Cys78-Cys91.

The protein belongs to the AVIT (prokineticin) family.

It is found in the secreted. Functionally, cytokine directly involved in hematopoiesis. In Pacifastacus leniusculus (Signal crayfish), this protein is Astakine.